We begin with the raw amino-acid sequence, 312 residues long: Gamma-soluble NSF attachment protein (312 aa).

Residues 281 to 312 (KKKSPATPQAKPDGVTATAADEEEDEYSGGLC) are disordered. Residue S284 is modified to Phosphoserine. Phosphothreonine is present on T287. Positions 300-312 (ADEEEDEYSGGLC) are enriched in acidic residues. Phosphoserine is present on S308.

Belongs to the SNAP family. In terms of assembly, interacts with RAB11FIP5. Interacts with VTI1A.

Its subcellular location is the membrane. The protein localises to the golgi apparatus. In terms of biological role, required for vesicular transport between the endoplasmic reticulum and the Golgi apparatus. The sequence is that of Gamma-soluble NSF attachment protein from Homo sapiens (Human).